A 255-amino-acid polypeptide reads, in one-letter code: Sulfate transporter CysZ (255 aa).

The next 4 membrane-spanning stretches (helical) occupy residues 26 to 46 (LFVLLPLAINLVLFVGLIYFA), 71 to 91 (LLWPLFVVLVVLMVFFTFTML), 150 to 170 (LFILSFIPVVNLIAAPLWLLF), and 211 to 231 (IVYLVLLVPVVNLLMMPAAVA).

It belongs to the CysZ family.

Its subcellular location is the cell inner membrane. Its function is as follows. High affinity, high specificity proton-dependent sulfate transporter, which mediates sulfate uptake. Provides the sulfur source for the cysteine synthesis pathway. The polypeptide is Sulfate transporter CysZ (Pseudomonas fluorescens (strain SBW25)).